A 1194-amino-acid chain; its full sequence is MESLLENPVRAVLYLKELTAIVQNQQSLIHTQRQRIDELERRLDELSAENRSLWEHQQLLQAQPPPGLVPPPSAPLPAPAATAPAATAAQEPLQDHGQLIPATPEPPLQHHGQLLAQPQPAPSSRVQTPQSPHQHPVAPGAVADKEKERPSSCCAAAGALLQHASPAALGKGVLSRRPKNETVLHQFCCPATDTEQKPACSDLASQSDGSCAQAGGGMEDSVVAAVAAGRPSAHAPKAQAPELQQEEERPGAVGSPRAGPLRAASPGQQQPALATALCSHTPAASEYELSLDLKNKQIEMLEHKYGGHLVSRRAACTIQTAFRQYQLSKNFEKIRNSLLESRLPRRISLRKVRAPTAESLVAEKALLESCGLLGLPLGRSPSLPPTFAGSLTELEDSFTEQVQSLAKSIDDALSTWSLKTMCSLQESGAYQLHQALHPSAGQPGLETEAAREPDSGPGSGDEAGSLPQGHSGTLMMAFRDVTVQIANQNISVSSSTALSVANCLGAQTAQATAEPAAVQTEQGDAATQEVSEVPASELMDPPVEDSEAAESGAQSAHEPTVAEAVVEEAVATEAEEEEEGAGQAGKGAEAEVGDNSEQLSSSSASTKSAKSGSEVSAAASKEALQAVILSLPRYHCENPASCRSPTLSTDTLRKRLYRIGLNLFNINPDKGIQFLISRGFIPDTPIGVAHFLLQRKGLSRQMIGEFLGNSKKQFNRDVLDCVVDEMDFSNMELDEALRKFQAHIRVQGEAQKVERLIEAFSQRYCMCNPEVVQQFHNPDTIFILAFAIILLNTDMYSPNIKPDRKMMLEDFIRNLRGVDDGADIPRELVVGIYERIQQKELKSNEDHVTYVTKVEKSIVGMKTVLSMPHRRLVCCSRLFEVTDVNKLQKQAAHQREVFLFNDLLVILKLCPKKKSSFTYTFCKAVGLLGMRFHLFENEYYSHGITLATPLSGSEKKQVLHFCALGSDEMQKFVEDLKESIAEVTELEQIRIEWELERQQGTKTLSARSAGAQGDPQSKQGSPTAKREAMAGEKATESSGEVSIHNRLQTFQHSPKLGVERGAPAPSPPTSPPPPLPPDPQPSPLREQPPPLPLPPPTPPGTLVQCQQIVKVIVLDKPCLARMEPLLSQALSCYASSSSDSCGSTPLRGPGSPVKVIHQPPLPPPPPPYNHPHQFCPPGSLLLRRRYSSGSRSLV.

Residues A20–H56 adopt a coiled-coil conformation. Disordered regions lie at residues A62 to R149 and G229 to A272. A compositionally biased stretch (pro residues) spans Q63 to A78. Positions P79–P92 are enriched in low complexity. The segment covering P122–H133 has biased composition (polar residues). At S255 the chain carries Phosphoserine. Residues S311 to E340 form the IQ domain. Disordered stretches follow at residues S439–S471 and P515–K610. 2 stretches are compositionally biased toward low complexity: residues V561 to T572 and S600 to K610. The 194-residue stretch at T646–K839 folds into the SEC7 domain. In terms of domain architecture, PH spans T852 to E985. 2 disordered regions span residues K1002–P1099 and S1137–C1175. Residues A1024 to T1035 are compositionally biased toward basic and acidic residues. Positions E1036–H1052 are enriched in polar residues. 2 stretches are compositionally biased toward pro residues: residues A1064–P1099 and P1159–N1169.

This sequence belongs to the BRAG family. In terms of assembly, interacts with DLG1 and DLG4. Interacts with GPHN. As to expression, expressed in brain. Localized to dendrites, as well as somas of neuronal cells.

The protein localises to the cytoplasm. Its subcellular location is the postsynaptic density. Its function is as follows. Acts as a guanine nucleotide exchange factor (GEF) for ARF1. This chain is IQ motif and SEC7 domain-containing protein 3 (Iqsec3), found in Rattus norvegicus (Rat).